Here is a 420-residue protein sequence, read N- to C-terminus: Ammonium transporter Amt2 (420 aa).

11 helical membrane-spanning segments follow: residues 34–54 (VFFL…FAML), 71–91 (NMVD…ILCS), 120–140 (SWFF…GGVA), 149–169 (VLIS…LGPW), 180–200 (AGSL…IAAL), 220–240 (IPMA…FNVG), 250–270 (GLVC…ALIA), 273–293 (NDVL…CSGT), 295–315 (VVSP…VPIV), 339–359 (VIGA…AGGV), and 365–385 (IIGA…LAKI).

The protein belongs to the ammonia transporter channel (TC 1.A.11.2) family. As to quaternary structure, homotrimer. Interacts and forms a complex with GlnK2.

It localises to the cell membrane. Functionally, involved in the uptake of ammonium/ammonia (NH(4)(+)/NH(3)). Transport is electrogenic. The chain is Ammonium transporter Amt2 from Methanocaldococcus jannaschii (strain ATCC 43067 / DSM 2661 / JAL-1 / JCM 10045 / NBRC 100440) (Methanococcus jannaschii).